Consider the following 1463-residue polypeptide: Nitric oxide synthase 1 (1463 aa).

Residues 1–200 (MESHMFSVQQ…LQGSGENNKL (200 aa)) form an interaction with NOSIP region. Residues 17–99 (SVRLFKRKVG…ETHVVLILRG (83 aa)) enclose the PDZ domain. 3 disordered regions span residues 110 to 194 (TFTG…LQGS), 215 to 250 (GKAINGGGPAKTETKDVEVQVDRDPDSKSHKPLPLG), and 268 to 298 (VVLNNPYSEKEQPSASGKQSPTKNGSPSKCP). The DYNLL1/PIN/nNOS-inhibiting protein-binding stretch occupies residues 158–240 (PDPGQEASSL…VEVQVDRDPD (83 aa)). Residues 226–243 (TETKDVEVQVDRDPDSKS) are compositionally biased toward basic and acidic residues. Polar residues predominate over residues 280-294 (PSASGKQSPTKNGSP). Serine 334 contributes to the (6R)-L-erythro-5,6,7,8-tetrahydrobiopterin binding site. Position 415 (cysteine 415) interacts with heme b. L-arginine contacts are provided by glutamine 478, tryptophan 587, tyrosine 588, and glutamate 592. The (6R)-L-erythro-5,6,7,8-tetrahydrobiopterin site is built by valine 677, tryptophan 678, and phenylalanine 691. Position 706 (tyrosine 706) interacts with heme b. The tract at residues 725 to 745 (KRRAIGFKKLAEAVKFSAKLM) is calmodulin-binding. Residues 755 to 969 (ATILYATETG…AFRTWAKKVF (215 aa)) form the Flavodoxin-like domain. FMN contacts are provided by threonine 761, glutamate 762, threonine 763, lysine 765, serine 766, serine 807, threonine 808, and glycine 812. Phosphoserine occurs at positions 881, 891, and 892. Positions 920, 925, 927, 953, and 957 each coordinate FMN. One can recognise an FAD-binding FR-type domain in the interval 1024–1271 (KRVSAARLLS…VRGAPSFHLP (248 aa)). Arginine 1044 contacts NADP(+). FAD contacts are provided by histidine 1066, arginine 1207, tyrosine 1208, tyrosine 1209, serine 1210, threonine 1225, and alanine 1227. Serine 1230 contributes to the NADP(+) binding site. FAD contacts are provided by tyrosine 1231, valine 1244, cysteine 1245, and serine 1246. Positions 1285, 1318, 1347, 1348, 1354, 1356, 1358, 1391, 1432, and 1434 each coordinate NADP(+).

It belongs to the NOS family. As to quaternary structure, homodimer. Interacts with DLG4; the interaction possibly being prevented by the association between NOS1 and CAPON. Forms a ternary complex with CAPON and RASD1. Forms a ternary complex with CAPON and SYN1. Interacts with ZDHHC23. Interacts with NOSIP; which may impair its synaptic location. Interacts with HTR4. Interacts with SLC6A4. Interacts with VAC14. Interacts (via N-terminal domain) with DLG4 (via N-terminal tandem pair of PDZ domains). Interacts with SLC6A4. Forms a complex with ASL, ASS1 and SLC7A1; the complex regulates cell-autonomous L-arginine synthesis and citrulline recycling while channeling extracellular L-arginine to nitric oxide synthesis pathway. Interacts with DMD; localizes NOS1 to sarcolemma in muscle cells. Interacts with DYNLL1; inhibits the nitric oxide synthase activity. It depends on heme b as a cofactor. The cofactor is FAD. Requires FMN as cofactor. (6R)-L-erythro-5,6,7,8-tetrahydrobiopterin is required as a cofactor. Post-translationally, ubiquitinated; mediated by STUB1/CHIP in the presence of Hsp70 and Hsp40 (in vitro).

Its subcellular location is the cell membrane. It is found in the sarcolemma. The protein localises to the cell projection. The protein resides in the dendritic spine. The catalysed reaction is 2 L-arginine + 3 NADPH + 4 O2 + H(+) = 2 L-citrulline + 2 nitric oxide + 3 NADP(+) + 4 H2O. Stimulated by calcium/calmodulin. Inhibited by DYNLL1 that prevents the dimerization of the protein. Inhibited by NOSIP. Produces nitric oxide (NO) which is a messenger molecule with diverse functions throughout the body. In the brain and peripheral nervous system, NO displays many properties of a neurotransmitter. Probably has nitrosylase activity and mediates cysteine S-nitrosylation of cytoplasmic target proteins such SRR. The polypeptide is Nitric oxide synthase 1 (NOS1) (Ovis aries (Sheep)).